We begin with the raw amino-acid sequence, 239 residues long: Lipoprotein-releasing system ATP-binding protein LolD (239 aa).

Residues 14–239 enclose the ABC transporter domain; the sequence is IRAERLGKTY…KLRELAPSAV (226 aa). 50–57 provides a ligand contact to ATP; it reads GASGAGKS.

The protein belongs to the ABC transporter superfamily. Lipoprotein translocase (TC 3.A.1.125) family. In terms of assembly, the complex is composed of two ATP-binding proteins (LolD) and two transmembrane proteins (LolC and LolE).

It localises to the cell inner membrane. Part of the ABC transporter complex LolCDE involved in the translocation of mature outer membrane-directed lipoproteins, from the inner membrane to the periplasmic chaperone, LolA. Responsible for the formation of the LolA-lipoprotein complex in an ATP-dependent manner. In Xanthomonas campestris pv. campestris (strain 8004), this protein is Lipoprotein-releasing system ATP-binding protein LolD.